The chain runs to 221 residues: Urease accessory protein UreG (221 aa).

GTP is bound at residue 19–26; that stretch reads GPVGSGKT.

Belongs to the SIMIBI class G3E GTPase family. UreG subfamily. In terms of assembly, homodimer. UreD, UreF and UreG form a complex that acts as a GTP-hydrolysis-dependent molecular chaperone, activating the urease apoprotein by helping to assemble the nickel containing metallocenter of UreC. The UreE protein probably delivers the nickel.

It is found in the cytoplasm. Facilitates the functional incorporation of the urease nickel metallocenter. This process requires GTP hydrolysis, probably effectuated by UreG. This chain is Urease accessory protein UreG, found in Yersinia enterocolitica serotype O:8 / biotype 1B (strain NCTC 13174 / 8081).